A 165-amino-acid chain; its full sequence is uncharacterized protein (165 aa).

A coiled-coil region spans residues Met1–Lys38.

This is an uncharacterized protein from Bacillus subtilis (strain 168).